Here is a 190-residue protein sequence, read N- to C-terminus: Holliday junction branch migration complex subunit RuvA (190 aa).

Residues 1–64 (MIGKLSGTLD…EDAQILYGFA (64 aa)) form a domain I region. Positions 65–137 (TSQERAAFRE…LKGKLGPDIG (73 aa)) are domain II. The segment at 137–141 (GVAAS) is flexible linker. A domain III region spans residues 142–190 (VANDSQADILQALLALGYSDKEAAAALKALPSDVGVSEGIRLALRALGK).

This sequence belongs to the RuvA family. Homotetramer. Forms an RuvA(8)-RuvB(12)-Holliday junction (HJ) complex. HJ DNA is sandwiched between 2 RuvA tetramers; dsDNA enters through RuvA and exits via RuvB. An RuvB hexamer assembles on each DNA strand where it exits the tetramer. Each RuvB hexamer is contacted by two RuvA subunits (via domain III) on 2 adjacent RuvB subunits; this complex drives branch migration. In the full resolvosome a probable DNA-RuvA(4)-RuvB(12)-RuvC(2) complex forms which resolves the HJ.

It localises to the cytoplasm. The RuvA-RuvB-RuvC complex processes Holliday junction (HJ) DNA during genetic recombination and DNA repair, while the RuvA-RuvB complex plays an important role in the rescue of blocked DNA replication forks via replication fork reversal (RFR). RuvA specifically binds to HJ cruciform DNA, conferring on it an open structure. The RuvB hexamer acts as an ATP-dependent pump, pulling dsDNA into and through the RuvAB complex. HJ branch migration allows RuvC to scan DNA until it finds its consensus sequence, where it cleaves and resolves the cruciform DNA. The polypeptide is Holliday junction branch migration complex subunit RuvA (Albidiferax ferrireducens (strain ATCC BAA-621 / DSM 15236 / T118) (Rhodoferax ferrireducens)).